A 372-amino-acid polypeptide reads, in one-letter code: tRNA-specific 2-thiouridylase MnmA (372 aa).

Residues 11–18 (GMSGGVDS) and Met37 contribute to the ATP site. The segment at 97 to 99 (NPD) is interaction with target base in tRNA. The active-site Nucleophile is the Cys102. Residues Cys102 and Cys199 are joined by a disulfide bond. Residue Gly126 coordinates ATP. The interval 149–151 (KDQ) is interaction with tRNA. The active-site Cysteine persulfide intermediate is the Cys199. An interaction with tRNA region spans residues 309 to 310 (RY).

It belongs to the MnmA/TRMU family.

It localises to the cytoplasm. The enzyme catalyses S-sulfanyl-L-cysteinyl-[protein] + uridine(34) in tRNA + AH2 + ATP = 2-thiouridine(34) in tRNA + L-cysteinyl-[protein] + A + AMP + diphosphate + H(+). Catalyzes the 2-thiolation of uridine at the wobble position (U34) of tRNA, leading to the formation of s(2)U34. The polypeptide is tRNA-specific 2-thiouridylase MnmA (Staphylococcus aureus (strain MSSA476)).